The sequence spans 418 residues: MLHPRARTMLLLSLPAVAIGIASSLILIVVMKIASVLQNLLWQRLPGTLGIAQDSPIWIIGVLTLTGIAVGLVIRFSQGHAGPDPACEPLIGAPVPPSALPGLIVALILGLAGGVSLGPEHPIMTVNIALAVAIGARLLPRVNRMEWTILASAGTIGALFGTPVAAALIFSQTLNGSSEVPLWDRLFAPLMAAAAGALTTGLFFHPHFSLPIAHYGQMEMTDILSGAIVAAIAIAAGMVAVWCLPRLHAMMNQMKNPVLVLGIGGFILGILGVIGGPVSLFKGLDEMQQMVANQAFSTSDYFLLAVIKLAALVVAAASGFRGGRIFPAVFVGVALGLMLHEHVPAVPAAITVSCAILGIVLVVTRDGWLSLFMAAVVVPNTTLLPLLCIVMLPAWLLLAGKPMMMVNRPKQQPPHDNV.

12 helical membrane passes run leucine 10–valine 30, aspartate 54–isoleucine 74, alanine 99–proline 119, glutamate 120–proline 140, isoleucine 149–isoleucine 169, leucine 186–proline 206, isoleucine 223–cysteine 243, valine 258–valine 278, aspartate 300–phenylalanine 320, glycine 322–histidine 342, valine 343–valine 363, and leucine 371–methionine 391.

It belongs to the chloride channel (TC 2.A.49) family.

Its subcellular location is the cell membrane. In Shigella sonnei (strain Ss046), this protein is Putative ion-transport protein YfeO.